A 357-amino-acid polypeptide reads, in one-letter code: Guanine nucleotide-binding protein G(o) subunit alpha (357 aa).

A lipid anchor (N-myristoyl glycine) is attached at Gly-2. The S-palmitoyl cysteine moiety is linked to residue Cys-3. Residues 32–357 enclose the G-alpha domain; it reads KDIKLLLLGA…ANNLRGCGLY (326 aa). Positions 35-48 are G1 motif; that stretch reads KLLLLGAGESGKST. GTP-binding positions include 40-47, 179-185, 204-208, 273-276, and Ala-329; these read GAGESGKS, LRTRVKT, DVGGQ, and NKKD. Residues Ser-47 and Thr-185 each coordinate Mg(2+). A G2 motif region spans residues 177–185; sequence DILRTRVKT. The segment at 200–209 is G3 motif; that stretch reads FKLFDVGGQR. A G4 motif region spans residues 269–276; the sequence is ILFLNKKD. Positions 327–332 are G5 motif; the sequence is TCATDT.

The protein belongs to the G-alpha family. G(i/o/t/z) subfamily. As to quaternary structure, g proteins are composed of 3 units; alpha, beta and gamma. The alpha chain contains the guanine nucleotide binding site.

Functionally, guanine nucleotide-binding proteins (G proteins) are involved as modulators or transducers in various transmembrane signaling systems. The G(o) protein function is not clear. This is Guanine nucleotide-binding protein G(o) subunit alpha (SCGOA) from Mizuhopecten yessoensis (Japanese scallop).